A 378-amino-acid polypeptide reads, in one-letter code: Protein RecA (378 aa).

Residues 1-20 form a disordered region; the sequence is MAAKKDKSVPDSKITDKEGK. 80-87 provides a ligand contact to ATP; it reads GAESSGKT. The segment at 344 to 378 is disordered; the sequence is GPVDKKKKKSKKEASSDDTDDENLEIDDAIDENND. Residues 359–378 show a composition bias toward acidic residues; the sequence is SDDTDDENLEIDDAIDENND.

The protein belongs to the RecA family.

It localises to the cytoplasm. In terms of biological role, can catalyze the hydrolysis of ATP in the presence of single-stranded DNA, the ATP-dependent uptake of single-stranded DNA by duplex DNA, and the ATP-dependent hybridization of homologous single-stranded DNAs. It interacts with LexA causing its activation and leading to its autocatalytic cleavage. The sequence is that of Protein RecA from Fusobacterium nucleatum subsp. nucleatum (strain ATCC 25586 / DSM 15643 / BCRC 10681 / CIP 101130 / JCM 8532 / KCTC 2640 / LMG 13131 / VPI 4355).